The sequence spans 396 residues: Purine ribonucleoside efflux pump NepI (396 aa).

Over Met-1–Ala-21 the chain is Cytoplasmic. A helical transmembrane segment spans residues Val-22 to Leu-42. At Leu-43–Glu-54 the chain is on the periplasmic side. A helical membrane pass occupies residues Gly-55–Ile-75. Residues Thr-76–Arg-85 lie on the Cytoplasmic side of the membrane. Residues Tyr-86–Asn-106 form a helical membrane-spanning segment. Residue Ser-107 is a topological domain, periplasmic. The helical transmembrane segment at Phe-108–Met-128 threads the bilayer. Residues Ser-129–Ser-147 are Cytoplasmic-facing. Residues Val-148–Gly-168 form a helical membrane-spanning segment. Residues Glu-169 to Asn-175 are Periplasmic-facing. Residues Val-176–Pro-196 traverse the membrane as a helical segment. Residues Ser-197 to Arg-215 lie on the Cytoplasmic side of the membrane. The helical transmembrane segment at Pro-216 to Phe-236 threads the bilayer. At Thr-237–Thr-255 the chain is on the periplasmic side. A helical transmembrane segment spans residues Leu-256–Leu-276. Over Lys-277–Lys-281 the chain is Cytoplasmic. The helical transmembrane segment at Leu-282 to Gly-302 threads the bilayer. The Periplasmic segment spans residues Ser-303–Lys-305. A helical membrane pass occupies residues Ile-306 to Trp-326. Residues Ser-327–Ser-343 are Cytoplasmic-facing. Residues Ile-344 to Leu-364 traverse the membrane as a helical segment. Over Asp-365–Asn-366 the chain is Periplasmic. Residues Ile-367–Val-387 traverse the membrane as a helical segment. The Cytoplasmic segment spans residues Thr-388 to Ser-396.

Belongs to the major facilitator superfamily. DHA1 family. NepI (TC 2.A.1.2.26) subfamily.

It is found in the cell inner membrane. The catalysed reaction is inosine(in) + H(+)(out) = inosine(out) + H(+)(in). It catalyses the reaction guanosine(in) + H(+)(out) = guanosine(out) + H(+)(in). Its function is as follows. Involved in the efflux of purine ribonucleosides, such as inosine and guanosine. The sequence is that of Purine ribonucleoside efflux pump NepI from Escherichia coli O6:H1 (strain CFT073 / ATCC 700928 / UPEC).